The chain runs to 403 residues: Acetyl-CoA acetyltransferase IB (403 aa).

Cys-91 serves as the catalytic Acyl-thioester intermediate. Active-site proton acceptor residues include His-353 and Cys-383. A Microbody targeting signal motif is present at residues 401-403 (AKL).

This sequence belongs to the thiolase-like superfamily. Thiolase family. In terms of assembly, multimeric.

It localises to the peroxisome. It catalyses the reaction 2 acetyl-CoA = acetoacetyl-CoA + CoA. The protein operates within metabolic intermediate biosynthesis; (R)-mevalonate biosynthesis; (R)-mevalonate from acetyl-CoA: step 1/3. The polypeptide is Acetyl-CoA acetyltransferase IB (PACTB) (Candida tropicalis (Yeast)).